A 498-amino-acid polypeptide reads, in one-letter code: L-amino acid oxidase (498 aa).

The N-terminal stretch at Ser1 to Cys11 is a signal peptide. A disulfide bridge connects residues Cys21 and Cys184. Residues Met54 to Ser55, Glu74 to Ala75, Glu74 to Arg78, Arg82, and Gly98 to Arg101 contribute to the FAD site. Substrate is bound at residue Arg101. An N-linked (GlcNAc...) asparagine glycan is attached at Asn183. Residue His234 coordinates substrate. FAD is bound at residue Val272. An intrachain disulfide couples Cys342 to Cys423. Tyr383 contacts substrate. Residues Glu468, Gly475 to Thr480, and Trp476 to Thr480 each bind FAD. Gly475–Trp476 provides a ligand contact to substrate.

The protein belongs to the flavin monoamine oxidase family. FIG1 subfamily. Homodimer; non-covalently linked. FAD serves as cofactor. In terms of processing, N-glycosylated. Contains 18.73% carbohydrates. As to expression, expressed by the venom gland.

It localises to the secreted. The catalysed reaction is an L-alpha-amino acid + O2 + H2O = a 2-oxocarboxylate + H2O2 + NH4(+). It catalyses the reaction L-leucine + O2 + H2O = 4-methyl-2-oxopentanoate + H2O2 + NH4(+). Its activity is regulated as follows. Strongly inhibited by glutathione, and moderately inhibited by PMSF, acetate iodine and glutamic acid. Is also inhibited by Zn(2+) ions, but not by Ca(2+), Mg(2+) and Mn(2+). Catalyzes an oxidative deamination of predominantly hydrophobic and aromatic L-amino acids, thus producing hydrogen peroxide that may contribute to the diverse toxic effects of this enzyme. This enzyme shows activity on L-Leu. This enzyme inhibits platelet aggregation in human platelet rich plasma induced by ADP (IC(50)=3.2 mg/mL), and shows antibacterial activities on both Gram-positive and Gram-negative bacteria (P.aeruginosa, V.cholerae, S.aureus, E.faecalis and E.coli). These two effects are due to hydrogen peroxide, since they are inhibited by catalase. It also induces edema in mouse paw pads but does not show hemolytic activity. This protein may also have activities in hemorrhage, and apoptosis. In Bothrops pictus (Desert lancehead), this protein is L-amino acid oxidase.